Here is a 357-residue protein sequence, read N- to C-terminus: Heat-inducible transcription repressor HrcA (357 aa).

The protein belongs to the HrcA family.

In terms of biological role, negative regulator of class I heat shock genes (grpE-dnaK-dnaJ and groELS operons). Prevents heat-shock induction of these operons. This chain is Heat-inducible transcription repressor HrcA, found in Chlorobium phaeobacteroides (strain DSM 266 / SMG 266 / 2430).